Consider the following 317-residue polypeptide: Bile salt hydrolase/transferase (317 aa).

The Nucleophile; acyl-thioester intermediate role is filled by C2. Residues C2 and R18 each contribute to the deoxycholate site. N82 is a taurine binding site.

This sequence belongs to the peptidase C59 family. As to quaternary structure, homotetramer. The tetramer consists of a dimer of dimers.

It carries out the reaction glycocholate + H2O = cholate + glycine. The catalysed reaction is glycodeoxycholate + H2O = deoxycholate + glycine. The enzyme catalyses chenodeoxycholate + glycine = glycochenodeoxycholate + H2O. It catalyses the reaction cholate + taurine = taurocholate + H2O. It carries out the reaction taurodeoxycholate + H2O = deoxycholate + taurine. The catalysed reaction is taurochenodeoxycholate + H2O = chenodeoxycholate + taurine. The enzyme catalyses an L-alpha-amino acid + cholate = an N-choloyl-L-alpha-amino acid + H2O. It catalyses the reaction an L-alpha-amino acid + taurocholate = an N-choloyl-L-alpha-amino acid + taurine. It carries out the reaction cholate + L-alanine = L-alanocholate + H2O. The catalysed reaction is taurocholate + L-alanine = L-alanocholate + taurine. The enzyme catalyses cholate + L-serine = L-serocholate + H2O. It catalyses the reaction taurocholate + L-serine = L-serocholate + taurine. It carries out the reaction cholate + L-histidine = L-histidocholate + H2O. The catalysed reaction is taurocholate + L-histidine = L-histidocholate + taurine. Its pathway is lipid metabolism; bile acid biosynthesis. In terms of biological role, possesses dual functions in bile acid metabolism. Acts as a bile salt hydrolase that catalyzes the deconjugation of glycine- and taurine-linked bile salts, which occurs naturally in the intestines of humans, releasing amino acid residues and deconjugated bile salts (bile acids). Can hydrolyze the amide bond in all six major human conjugated bile salts, namely glycocholate (GCA), glycodeoxycholate (GDCA), glycochenodeoxycholate (GCDCA), taurocholate (TCA), taurodeoxycholate (TDCA) and taurochenodeoxycholate (TCDCA). Shows a slight preference for glycine-conjugated bile acids as substrates. Also acts as an amine N-acyltransferase that conjugates a wide variety of amino acids to conjugated and non-conjugated bile acids, thus producing bacterial bile acid amidates (BBAAs) - also named microbially conjugated bile acids (MCBAs) - in the gastrointestinal tract. These BBAAs may facilitate communication between the microbiota and host through the activation of human ligand-activated transcription factors. This is Bile salt hydrolase/transferase from Bifidobacterium longum subsp. longum (strain ATCC 15707 / DSM 20219 / JCM 1217 / NCTC 11818 / E194b).